Consider the following 134-residue polypeptide: S-adenosylmethionine decarboxylase proenzyme (134 aa).

Residue S64 is the Schiff-base intermediate with substrate; via pyruvic acid of the active site. Residue S64 is modified to Pyruvic acid (Ser); by autocatalysis. Residue H69 is the Proton acceptor; for processing activity of the active site. The active-site Proton donor; for catalytic activity is the C84.

The protein belongs to the prokaryotic AdoMetDC family. Type 1 subfamily. Heterotetramer of two alpha and two beta chains arranged as a dimer of alpha/beta heterodimers. Requires pyruvate as cofactor. Post-translationally, is synthesized initially as an inactive proenzyme. Formation of the active enzyme involves a self-maturation process in which the active site pyruvoyl group is generated from an internal serine residue via an autocatalytic post-translational modification. Two non-identical subunits are generated from the proenzyme in this reaction, and the pyruvate is formed at the N-terminus of the alpha chain, which is derived from the carboxyl end of the proenzyme. The post-translation cleavage follows an unusual pathway, termed non-hydrolytic serinolysis, in which the side chain hydroxyl group of the serine supplies its oxygen atom to form the C-terminus of the beta chain, while the remainder of the serine residue undergoes an oxidative deamination to produce ammonia and the pyruvoyl group blocking the N-terminus of the alpha chain.

The enzyme catalyses S-adenosyl-L-methionine + H(+) = S-adenosyl 3-(methylsulfanyl)propylamine + CO2. It functions in the pathway amine and polyamine biosynthesis; S-adenosylmethioninamine biosynthesis; S-adenosylmethioninamine from S-adenosyl-L-methionine: step 1/1. In terms of biological role, catalyzes the decarboxylation of S-adenosylmethionine to S-adenosylmethioninamine (dcAdoMet), the propylamine donor required for the synthesis of the polyamines spermine and spermidine from the diamine putrescine. The sequence is that of S-adenosylmethionine decarboxylase proenzyme from Hydrogenobaculum sp. (strain Y04AAS1).